Consider the following 206-residue polypeptide: Large ribosomal subunit protein uL4 (206 aa).

Residues 63–93 (MYKQKGTGRARHHSARAPQFRGGGKAHGPVV) form a disordered region. The span at 64 to 77 (YKQKGTGRARHHSA) shows a compositional bias: basic residues.

This sequence belongs to the universal ribosomal protein uL4 family. Part of the 50S ribosomal subunit.

One of the primary rRNA binding proteins, this protein initially binds near the 5'-end of the 23S rRNA. It is important during the early stages of 50S assembly. It makes multiple contacts with different domains of the 23S rRNA in the assembled 50S subunit and ribosome. In terms of biological role, forms part of the polypeptide exit tunnel. The chain is Large ribosomal subunit protein uL4 from Sinorhizobium medicae (strain WSM419) (Ensifer medicae).